The primary structure comprises 229 residues: Potassium/proton antiporter CemA (229 aa).

A run of 4 helical transmembrane segments spans residues 7 to 27 (FTPL…SLSF), 114 to 134 (IICF…LVIL), 154 to 174 (ILLV…ELMI), and 189 to 209 (IISG…KYWI).

Belongs to the CemA family.

The protein localises to the plastid. Its subcellular location is the chloroplast inner membrane. The enzyme catalyses K(+)(in) + H(+)(out) = K(+)(out) + H(+)(in). Functionally, contributes to K(+)/H(+) antiport activity by supporting proton efflux to control proton extrusion and homeostasis in chloroplasts in a light-dependent manner to modulate photosynthesis. Prevents excessive induction of non-photochemical quenching (NPQ) under continuous-light conditions. Indirectly promotes efficient inorganic carbon uptake into chloroplasts. This chain is Potassium/proton antiporter CemA, found in Acorus calamus var. americanus (American sweet flag).